The chain runs to 242 residues: uncharacterized protein (242 aa).

The first 17 residues, methionine 1–alanine 17, serve as a signal peptide directing secretion. N-linked (GlcNAc...) asparagine glycosylation is found at asparagine 47, asparagine 86, asparagine 122, asparagine 159, and asparagine 178. Residues asparagine 176–alanine 214 form a disordered region. Residues serine 180–alanine 214 are compositionally biased toward low complexity. Residue alanine 218 is the site of GPI-like-anchor amidated alanine attachment. A propeptide spans glycine 219–leucine 242 (removed in mature form).

The GPI-like anchor contains a phosphoceramide lipid group. The anchor position has not been determined.

Its subcellular location is the cell membrane. This is an uncharacterized protein from Aspergillus fumigatus (strain ATCC MYA-4609 / CBS 101355 / FGSC A1100 / Af293) (Neosartorya fumigata).